Reading from the N-terminus, the 87-residue chain is Small ribosomal subunit protein bS20 (87 aa).

It belongs to the bacterial ribosomal protein bS20 family.

Its function is as follows. Binds directly to 16S ribosomal RNA. The sequence is that of Small ribosomal subunit protein bS20 from Corynebacterium jeikeium (strain K411).